We begin with the raw amino-acid sequence, 349 residues long: Fe(3+) ions import ATP-binding protein FbpC (349 aa).

In terms of domain architecture, ABC transporter spans 4-236 (LDFNKIGKSY…PIDEPTATFL (233 aa)). 36 to 43 (GPSGSGKT) is a binding site for ATP.

The protein belongs to the ABC transporter superfamily. Fe(3+) ion importer (TC 3.A.1.10) family. In terms of assembly, the complex is composed of two ATP-binding proteins (FbpC), two transmembrane proteins (FbpB) and a solute-binding protein (FbpA).

It is found in the cell inner membrane. It carries out the reaction Fe(3+)(out) + ATP + H2O = Fe(3+)(in) + ADP + phosphate + H(+). Functionally, part of the ABC transporter complex FbpABC involved in Fe(3+) ions import. Responsible for energy coupling to the transport system. In Yersinia enterocolitica, this protein is Fe(3+) ions import ATP-binding protein FbpC.